Here is a 360-residue protein sequence, read N- to C-terminus: Phospho-N-acetylmuramoyl-pentapeptide-transferase (360 aa).

10 consecutive transmembrane segments (helical) span residues 27–47, 73–93, 98–118, 134–154, 168–188, 199–219, 239–259, 263–283, 288–308, and 337–357; these read GAVMTAMLVAFVFGPGIIEWL, TMGGIMILLGVGVATLLWADL, VWAVLLLTLGYGAIGFADDYL, LVAQVGMAVIAGLWIMLLGQG, LTFNLGWFYLPFAAFVMVGAS, GLAIVPVMIAAGVFMLIAYLV, LAVFCGAIVGAAVGFLWFNAP, VFMGDTGSLALGGALGAVSVV, IVLAIVGGLFVLETVSVIVQV, and TVVIRFWIIAMILAIVGLSTL.

This sequence belongs to the glycosyltransferase 4 family. MraY subfamily. Mg(2+) is required as a cofactor.

The protein localises to the cell inner membrane. It carries out the reaction UDP-N-acetyl-alpha-D-muramoyl-L-alanyl-gamma-D-glutamyl-meso-2,6-diaminopimeloyl-D-alanyl-D-alanine + di-trans,octa-cis-undecaprenyl phosphate = di-trans,octa-cis-undecaprenyl diphospho-N-acetyl-alpha-D-muramoyl-L-alanyl-D-glutamyl-meso-2,6-diaminopimeloyl-D-alanyl-D-alanine + UMP. It participates in cell wall biogenesis; peptidoglycan biosynthesis. Functionally, catalyzes the initial step of the lipid cycle reactions in the biosynthesis of the cell wall peptidoglycan: transfers peptidoglycan precursor phospho-MurNAc-pentapeptide from UDP-MurNAc-pentapeptide onto the lipid carrier undecaprenyl phosphate, yielding undecaprenyl-pyrophosphoryl-MurNAc-pentapeptide, known as lipid I. The sequence is that of Phospho-N-acetylmuramoyl-pentapeptide-transferase from Rhodospirillum rubrum (strain ATCC 11170 / ATH 1.1.1 / DSM 467 / LMG 4362 / NCIMB 8255 / S1).